The following is a 158-amino-acid chain: MRAPMTSKGAQRLREELEHLKSVKRPEVINAIAEARAHGDLKENAEYHAAREQQSFIEGRIKQLESELSHAEIIDITKLSAGTKIVFGATVTLADTETDEEKRYQIVGDLEADIKMGLIAISSPLARALIGKLEGDSVTIDAPAGQREYEVVSVAYLD.

The stretch at 45–73 forms a coiled coil; that stretch reads AEYHAAREQQSFIEGRIKQLESELSHAEI.

It belongs to the GreA/GreB family.

In terms of biological role, necessary for efficient RNA polymerase transcription elongation past template-encoded arresting sites. The arresting sites in DNA have the property of trapping a certain fraction of elongating RNA polymerases that pass through, resulting in locked ternary complexes. Cleavage of the nascent transcript by cleavage factors such as GreA or GreB allows the resumption of elongation from the new 3'terminus. GreA releases sequences of 2 to 3 nucleotides. The chain is Transcription elongation factor GreA from Xanthomonas axonopodis pv. citri (strain 306).